The following is a 142-amino-acid chain: Hemoglobin subunit alpha (142 aa).

The region spanning 2–142 (VLSAADKGNV…VSTVLTSKYR (141 aa)) is the Globin domain. Serine 4 bears the Phosphoserine mark. Lysine 8 and lysine 12 each carry N6-succinyllysine. An N6-acetyllysine; alternate modification is found at lysine 17. Lysine 17 is subject to N6-succinyllysine; alternate. Tyrosine 25 is modified (phosphotyrosine). Serine 36 is modified (phosphoserine). The residue at position 41 (lysine 41) is an N6-succinyllysine. Phosphoserine is present on serine 50. An O2-binding site is contributed by histidine 59. Residue histidine 88 coordinates heme b. A Phosphoserine modification is found at serine 103. Threonine 109 carries the post-translational modification Phosphothreonine. Serine 125 carries the post-translational modification Phosphoserine. 2 positions are modified to phosphothreonine: threonine 135 and threonine 138. Serine 139 carries the phosphoserine modification.

Belongs to the globin family. As to quaternary structure, heterotetramer of two alpha chains and two beta chains. Red blood cells.

Its function is as follows. Involved in oxygen transport from the lung to the various peripheral tissues. Functionally, hemopressin acts as an antagonist peptide of the cannabinoid receptor CNR1. Hemopressin-binding efficiently blocks cannabinoid receptor CNR1 and subsequent signaling. The polypeptide is Hemoglobin subunit alpha (HBA) (Bos taurus (Bovine)).